A 334-amino-acid chain; its full sequence is Aspartate carbamoyltransferase catalytic subunit (334 aa).

The carbamoyl phosphate site is built by Arg-71 and Thr-72. L-aspartate is bound at residue Lys-99. 3 residues coordinate carbamoyl phosphate: Arg-121, His-151, and Gln-154. The L-aspartate site is built by Arg-184 and Arg-239. The carbamoyl phosphate site is built by Gly-280 and Pro-281.

This sequence belongs to the aspartate/ornithine carbamoyltransferase superfamily. ATCase family. Heterododecamer (2C3:3R2) of six catalytic PyrB chains organized as two trimers (C3), and six regulatory PyrI chains organized as three dimers (R2).

The enzyme catalyses carbamoyl phosphate + L-aspartate = N-carbamoyl-L-aspartate + phosphate + H(+). It functions in the pathway pyrimidine metabolism; UMP biosynthesis via de novo pathway; (S)-dihydroorotate from bicarbonate: step 2/3. In terms of biological role, catalyzes the condensation of carbamoyl phosphate and aspartate to form carbamoyl aspartate and inorganic phosphate, the committed step in the de novo pyrimidine nucleotide biosynthesis pathway. The chain is Aspartate carbamoyltransferase catalytic subunit from Pseudomonas syringae pv. syringae (strain B728a).